The following is a 464-amino-acid chain: ATP synthase subunit beta (464 aa).

153 to 160 (GGAGVGKT) provides a ligand contact to ATP.

Belongs to the ATPase alpha/beta chains family. F-type ATPases have 2 components, CF(1) - the catalytic core - and CF(0) - the membrane proton channel. CF(1) has five subunits: alpha(3), beta(3), gamma(1), delta(1), epsilon(1). CF(0) has three main subunits: a(1), b(2) and c(9-12). The alpha and beta chains form an alternating ring which encloses part of the gamma chain. CF(1) is attached to CF(0) by a central stalk formed by the gamma and epsilon chains, while a peripheral stalk is formed by the delta and b chains.

Its subcellular location is the cell inner membrane. It catalyses the reaction ATP + H2O + 4 H(+)(in) = ADP + phosphate + 5 H(+)(out). Produces ATP from ADP in the presence of a proton gradient across the membrane. The catalytic sites are hosted primarily by the beta subunits. The chain is ATP synthase subunit beta from Burkholderia lata (strain ATCC 17760 / DSM 23089 / LMG 22485 / NCIMB 9086 / R18194 / 383).